Here is an 802-residue protein sequence, read N- to C-terminus: Acetyl-CoA decarbonylase/synthase complex subunit alpha (802 aa).

Positions 69, 72, 73, 75, 80, and 90 each coordinate [4Fe-4S] cluster. CO is bound at residue His113. 3 residues coordinate [Ni-4Fe-4S] cluster: His246, Cys274, and Cys319. 4Fe-4S ferredoxin-type domains follow at residues 404–432 (EELK…ISEA) and 442–473 (SKFE…VIEK). The [4Fe-4S] cluster site is built by Cys413, Cys416, Cys419, Cys423, Cys451, Cys454, Cys457, and Cys461. [Ni-4Fe-4S] cluster contacts are provided by Cys519, Cys548, and Cys583.

Belongs to the Ni-containing carbon monoxide dehydrogenase family. Heterotetramer of two alpha and two epsilon subunits. The ACDS complex is made up of alpha, epsilon, beta, gamma and delta subunits with a probable stoichiometry of (alpha(2)epsilon(2))(4)-beta(8)-(gamma(1)delta(1))(8). Requires [4Fe-4S] cluster as cofactor. The cofactor is [Ni-4Fe-4S] cluster.

The catalysed reaction is CO + 2 oxidized [2Fe-2S]-[ferredoxin] + H2O = 2 reduced [2Fe-2S]-[ferredoxin] + CO2 + 2 H(+). The protein operates within one-carbon metabolism; methanogenesis from acetate. Functionally, part of the ACDS complex that catalyzes the reversible cleavage of acetyl-CoA, allowing growth on acetate as sole source of carbon and energy. The alpha-epsilon subcomponent functions as a carbon monoxide dehydrogenase. The chain is Acetyl-CoA decarbonylase/synthase complex subunit alpha from Methanococcoides burtonii (strain DSM 6242 / NBRC 107633 / OCM 468 / ACE-M).